The sequence spans 360 residues: GDP-mannose transporter (360 aa).

Residues 1 to 49 (MSSSETKGRNEEDVAEIKKAIATGAVKDPSNLSAIPPIFVVSGANFSMN) lie on the Cytoplasmic side of the membrane. A helical membrane pass occupies residues 50 to 67 (FLLLCIQSSVCCACVFAV). Residues 68 to 84 (KKLGIISFRDFDMKDAK) are Lumenal-facing. Residues 85–105 (MWFPISFLLVSVIYTGSKSLQ) form a helical membrane-spanning segment. Topologically, residues 106 to 110 (YLSIP) are cytoplasmic. Residues 111 to 131 (VYTIFKNLTIILIAYGEVLWF) form a helical membrane-spanning segment. Residues 132–134 (GGR) are Lumenal-facing. Residues 135–155 (VTALTFVSFIFMVISSIIAAW) traverse the membrane as a helical segment. The Cytoplasmic segment spans residues 156 to 164 (SDVQSALAS). Residues 165 to 185 (SIPGASSGVSVGAMQSLFGAL) traverse the membrane as a helical segment. Position 186 (arginine 186) is a topological domain, lumenal. Residues 187 to 207 (GLNVGYFWMLVNCLTSAAYVL) traverse the membrane as a helical segment. At 208–220 (SMRKRIKSTGFSD) the chain is on the cytoplasmic side. Residues 221 to 241 (WDTMFYNNLLSIPVLAVFSLI) traverse the membrane as a helical segment. Residues 242–260 (AEDWGRENLNRNFPAETRN) are Lumenal-facing. Residues 261–281 (FLLFAIAFSGAAAVGISYTTA) form a helical membrane-spanning segment. At 282–291 (WCVRVTSSTT) the chain is on the cytoplasmic side. Residues 292 to 312 (YSMVGALNKLPVAASGMLFFG) form a helical membrane-spanning segment. Residues 313–314 (DP) lie on the Lumenal side of the membrane. Residues 315–335 (VTVGSVSAVGVGFFAGIVYAV) form a helical membrane-spanning segment. Topologically, residues 336–360 (AKNNQKKNERRQAADAIIPMASRKP) are cytoplasmic.

Belongs to the TPT transporter family. SLC35D subfamily. As to quaternary structure, homooligomer.

It localises to the golgi apparatus membrane. It is found in the cytoplasmic vesicle membrane. Its subcellular location is the endoplasmic reticulum membrane. In terms of biological role, involved in the import of GDP-mannose from the cytoplasm into the Golgi lumen. This Coprinopsis cinerea (strain Okayama-7 / 130 / ATCC MYA-4618 / FGSC 9003) (Inky cap fungus) protein is GDP-mannose transporter (VRG4).